A 299-amino-acid chain; its full sequence is uncharacterized protein (299 aa).

Positions 1 to 59 (MDKIHAMQLFIKVAELESFSRAADFFALPKGSVSRQIQALEHQLGTQLLQRTTRRVKLT) constitute an HTH lysR-type domain. A DNA-binding region (H-T-H motif) is located at residues 19–38 (FSRAADFFALPKGSVSRQIQ).

Belongs to the LysR transcriptional regulatory family.

This is an uncharacterized protein from Escherichia coli (strain K12).